We begin with the raw amino-acid sequence, 500 residues long: Glutamate decarboxylase 3 (500 aa).

Position 8 is a phosphoserine (serine 8). N6-(pyridoxal phosphate)lysine is present on lysine 277.

This sequence belongs to the group II decarboxylase family. In terms of assembly, homohexamer. Interacts with calmodulin. The cofactor is pyridoxal 5'-phosphate. As to expression, expressed at low levels in siliques.

The catalysed reaction is L-glutamate + H(+) = 4-aminobutanoate + CO2. Catalyzes the production of GABA. The calmodulin-binding is calcium-dependent and it is proposed that this may, directly or indirectly, form a calcium regulated control of GABA biosynthesis. In Arabidopsis thaliana (Mouse-ear cress), this protein is Glutamate decarboxylase 3 (GAD3).